The following is a 198-amino-acid chain: HTH-type transcriptional regulator BetI (198 aa).

Residues 8–68 (PLRRRELIDA…ATMRHLLREL (61 aa)) form the HTH tetR-type domain. A DNA-binding region (H-T-H motif) is located at residues 31 to 50 (TVAQIAHEAGVSPALAHHYF).

It participates in amine and polyamine biosynthesis; betaine biosynthesis via choline pathway [regulation]. Repressor involved in the biosynthesis of the osmoprotectant glycine betaine. It represses transcription of the choline transporter BetT and the genes of BetAB involved in the synthesis of glycine betaine. The chain is HTH-type transcriptional regulator BetI from Brucella suis (strain ATCC 23445 / NCTC 10510).